The sequence spans 273 residues: uncharacterized protein (273 aa).

This sequence belongs to the AtsA family.

This is an uncharacterized protein from Mycobacterium tuberculosis (strain CDC 1551 / Oshkosh).